An 89-amino-acid chain; its full sequence is Large ribosomal subunit protein bL31B (89 aa).

The protein belongs to the bacterial ribosomal protein bL31 family. Type B subfamily. Part of the 50S ribosomal subunit.

The protein is Large ribosomal subunit protein bL31B of Enterococcus faecalis (strain ATCC 700802 / V583).